The following is a 652-amino-acid chain: Bifunctional protein ThiO/ThiG (652 aa).

The segment at 1 to 366 is thiO; it reads MTRDIVIIGG…HYSRSQKQAS (366 aa). FAD contacts are provided by residues 5 to 19 and 44 to 46; these read IVII…AIAV and AGM. Glu-52 is a glycine binding site. An FAD-binding site is contributed by Val-173. Residues Arg-301 and Arg-327 each contribute to the glycine site. 325 to 331 contacts FAD; it reads HYRNGIL. The interval 393 to 652 is thiG; the sequence is PLIIAGKSFH…ASSPVTGTIS (260 aa). Residue Lys-494 is the Schiff-base intermediate with DXP of the active site. 1-deoxy-D-xylulose 5-phosphate is bound by residues Gly-555, 581 to 582, and 603 to 604; these read AG and NS.

In the N-terminal section; belongs to the DAO family. ThiO subfamily. It in the C-terminal section; belongs to the ThiG family. In terms of assembly, interacts with ThiH and ThiS. It depends on FAD as a cofactor.

The protein resides in the cytoplasm. It carries out the reaction glycine + O2 + H2O = glyoxylate + H2O2 + NH4(+). The enzyme catalyses [ThiS sulfur-carrier protein]-C-terminal-Gly-aminoethanethioate + 2-iminoacetate + 1-deoxy-D-xylulose 5-phosphate = [ThiS sulfur-carrier protein]-C-terminal Gly-Gly + 2-[(2R,5Z)-2-carboxy-4-methylthiazol-5(2H)-ylidene]ethyl phosphate + 2 H2O + H(+). It functions in the pathway cofactor biosynthesis; thiamine diphosphate biosynthesis. Catalyzes the FAD-dependent oxidative deamination of glycine. Is essential for thiamine biosynthesis since the oxidation of glycine catalyzed by ThiO generates the glycine imine intermediate (dehydroglycine) required for the biosynthesis of the thiazole ring of thiamine pyrophosphate. In terms of biological role, catalyzes the rearrangement of 1-deoxy-D-xylulose 5-phosphate (DXP) to produce the thiazole phosphate moiety of thiamine. Sulfur is provided by the thiocarboxylate moiety of the carrier protein ThiS. In vitro, sulfur can be provided by H(2)S. In Nostoc sp. (strain PCC 7120 / SAG 25.82 / UTEX 2576), this protein is Bifunctional protein ThiO/ThiG (thiO/thiG).